We begin with the raw amino-acid sequence, 2355 residues long: MEMRALGSSCSTGNGGSAPITLTNISPWITTVFPSTVKLRSSLRTFKGVSSRVRTFKGVSSTRVLSRTKQQFPLFCFLNPDPISFLENDVSEAERTVVLPDGSVNGAGSVNGYHSDVVPGRNVAEVNEFCKALGGKRPIHSILVATNGMAAVKFIRSVRTWAYETFGSEKAVKLVAMATPEDMRINAEHIRIADQFVEVPGGTNNNNYANVQLIVEMAEVTRVDAVWPGWGHASENPELPDALKEKGIIFLGPPADSMIALGDKIGSSLIAQAADVPTLPWSGSHVKIPPGRSLVTVPEEIYKKACVYTTEEAIASCQVVGYPAMIKASWGGGGKGIRKVHNDDEVRALFKQVQGEVPGSPIFIMKVASQSRHLEAQLLCDQYGNVAALHSRDCSVQRRHQKIIEEGPITVAPQETIKKLEQAARRLAKSVNYVGAATVEYLYSMDTGEYYFLELNPRLQVEHPVTEWIAEVNLPAAQVAVGMGIPLWQIPEIRRFYGMEHGGGYDSWRKTSVVASPFDFDEAESLRPKGHCVAVRVTSEDPDDGFKPTSGEIQELSFKSKPNMWSYFSVKSGGGIHEFSDSQFGHVFAFGESRSVAIANMVLALKEIQIRGDIRTNVDYTIDLLHASDYRENKIHTGWLDSRIAMRVRAERPPWYLSVVGGALYKASTTSSAVVSDYVGYLEKGQIPPKHISLVHSQVSLNIEGSKYTIDVVRGGSGTYRLRMSNSEVVAEIHTLRDGGLLMQLDGKSHVIYAKEEATGTRLLIDGRTCLLQNDHDPSKLMAETPCKLLRYLVSDNSSIDTDTPYAEVEVMKMCMPLISPASGVIHFKLSEGQAMQAGELIAKLDLDDPSAVRKAKPFRGSFPRLGLPTAISGKVHQRCAATLNAARMILAGYDHKVDEVLQDLLNCLDSPELPFLQWQECFAVLATRLPKDLRNMLELKYKEFEIISKTSLTPDFPAKLLKGILEAHLSSCDEKERGSLERLIEPLMSLVKSYEGGRESHARLIVHSLFEEYLSVEELFNDNMLADVIERMRQQYKKDRLKIVDIVLSHQGIIHKNKLVLRLMEQLVYPNPAAYREKLIRFSALNHTNYSQLALKASQLLEQTKRSELRSNIARSLSELEMFTEAGENMDTPKRKSAISETMENLVSSSLAVEDALVGLFDHSDHTLQRRVVETYIHRLYQPYVVKESVRMQWHQSGVIASWEFLEHFERKNTGPDDHEISEKGIVAKSSKRKRGTMVIIKSLQFLPSIINASLRETNHSHCEYARAPLSGNMMHIAVVGINNQMSLLQDSGDEDQTQERVNKLAKILKEEEVSLTLCSAGVGVISCIIQRDEGRTPMRHSFHWLMEKQYYVEEPLLRHVEPPLSVYLELDKLKGYSNIQYSPSRDRQWHMYSVTDRPVPIKRMFLRSLVRQTTMNDGFLLQQGQDYQLSQTVLSMAFTSKCILRSLMNAMEELELNAHNAAMKPDHAHMFLCILREQQIDDLVPYPRRFEVNAEDEETTVETILEEATQEIHRSVGVRMHALGVCEWEVRLWLVSSGLANGAWRVVVANVTGRTCTVHIYREVEATGRNSLIYHSITKKGPLHGTLINGQYKPLNNLDRKRLAARRSNTTYCYDFPLAFETALELNWASQHSGVRKPCKNRLINVKELVFSNTEGSLGTSLIPVERPAGLNDIGMVAWILEMSTPEFPMGRKLLIVANDVTFKAGSFGPREDAFFLAVTELACTKKLPLIYLAANSGARLGVAEEVKACFKVGWSDEVSPGNDFQYIYLSSEDYARIGSSVIAHEVKLPSGETRWVIDTIVGKEDGLGVENLTGSGAIAGAYSRAYNETFTLTFVSGRSVGIGAYLARLGMRCIQRLDQPIILTGFSTLNKLLGREVYSSHMQLGGPKIMGTNGVVHLTVSDDLEGVSAILNWLSYIPAYVGGPLPVLAPLDPPERTVEYIPENSCDPRAAIAGINDNTGKWLGGIFDKNSFVETLEGWARTVVTGRAKLGGIPIGVVAVETQTVMHVIPADPGQLDSHERVVPQAGQVWFPDSAAKTAQALMDFNREQLPLFIIANWRGFSGGQRDLFEGILQAGSAIVENLRTYRQPVFVYIPMMGELRGGAWVVVDSQINSDYIEMYADETARGNVLEPEGMIEIKFRRKELLECMGRLDQTLINLKANIQDAKRNKAYANIELLQKQIKTREKQLLPVYTQIATKFAELHDTSMRMAAKGVIKSVVEWSGSRSFFYKKLYRRIAESSLVRNIRKASGDILSYKSAMGLIQDWFRKSEIAKGKEEAWTDDQLFFTWKDNVSNYEQKLSELRTQKLLNQLAEIGNSSDLQALPQGLANLLNKVDLSRREELVDAIRKVLG.

The Biotin carboxylation domain occupies Pro-138–Ala-645. The ATP-grasp domain maps to Gly-291–Ile-485. Cys-317–Leu-374 lines the ATP pocket. Glu-440, Glu-454, and Asn-456 together coordinate Mg(2+). Positions 440, 454, and 456 each coordinate Mn(2+). Arg-458 is an active-site residue. The region spanning Leu-772–Asp-846 is the Biotinyl-binding domain. Lys-813 carries the post-translational modification N6-biotinyllysine. Thr-1133 is subject to Phosphothreonine. Ser-1293 is subject to Phosphoserine. A CoA carboxyltransferase N-terminal domain is found at Gln-1593–Ala-1932. Positions Gln-1593–Lys-2251 are carboxyltransferase. CoA-binding residues include Arg-1841, Lys-2142, and Arg-2144. The region spanning Pro-1936–Lys-2251 is the CoA carboxyltransferase C-terminal domain.

As to quaternary structure, homodimer. Requires biotin as cofactor. It depends on Mg(2+) as a cofactor. Mn(2+) is required as a cofactor. In terms of tissue distribution, widely expressed at low levels.

Its subcellular location is the cytoplasm. The protein localises to the cytosol. The catalysed reaction is hydrogencarbonate + acetyl-CoA + ATP = malonyl-CoA + ADP + phosphate + H(+). The enzyme catalyses N(6)-biotinyl-L-lysyl-[protein] + hydrogencarbonate + ATP = N(6)-carboxybiotinyl-L-lysyl-[protein] + ADP + phosphate + H(+). It functions in the pathway lipid metabolism; malonyl-CoA biosynthesis; malonyl-CoA from acetyl-CoA: step 1/1. Functionally, multifunctional enzyme that catalyzes the carboxylation of acetyl-CoA, forming malonyl-CoA, which is used in the plastid for fatty acid synthesis and in the cytosol in various biosynthetic pathways including fatty acid elongation. In Arabidopsis thaliana (Mouse-ear cress), this protein is Acetyl-CoA carboxylase 2 (ACC2).